Here is a 197-residue protein sequence, read N- to C-terminus: Probable chorismate pyruvate-lyase (197 aa).

The span at 1–14 (MRFDAADAHWRETP) shows a compositional bias: basic and acidic residues. The segment at 1–25 (MRFDAADAHWRETPRPGASGAQKDW) is disordered. Substrate-binding residues include arginine 73, leucine 111, and glutamate 173.

Belongs to the UbiC family.

It localises to the cytoplasm. The catalysed reaction is chorismate = 4-hydroxybenzoate + pyruvate. It participates in cofactor biosynthesis; ubiquinone biosynthesis. Removes the pyruvyl group from chorismate, with concomitant aromatization of the ring, to provide 4-hydroxybenzoate (4HB) for the ubiquinone pathway. The polypeptide is Probable chorismate pyruvate-lyase (Burkholderia thailandensis (strain ATCC 700388 / DSM 13276 / CCUG 48851 / CIP 106301 / E264)).